The primary structure comprises 256 residues: Acetyl-coenzyme A carboxylase carboxyl transferase subunit alpha (256 aa).

A CoA carboxyltransferase C-terminal domain is found at 1–236 (MTDVARILKE…KSHLIDEITQ (236 aa)).

It belongs to the AccA family. Acetyl-CoA carboxylase is a heterohexamer composed of biotin carboxyl carrier protein (AccB), biotin carboxylase (AccC) and two subunits each of ACCase subunit alpha (AccA) and ACCase subunit beta (AccD).

Its subcellular location is the cytoplasm. It carries out the reaction N(6)-carboxybiotinyl-L-lysyl-[protein] + acetyl-CoA = N(6)-biotinyl-L-lysyl-[protein] + malonyl-CoA. The protein operates within lipid metabolism; malonyl-CoA biosynthesis; malonyl-CoA from acetyl-CoA: step 1/1. Functionally, component of the acetyl coenzyme A carboxylase (ACC) complex. First, biotin carboxylase catalyzes the carboxylation of biotin on its carrier protein (BCCP) and then the CO(2) group is transferred by the carboxyltransferase to acetyl-CoA to form malonyl-CoA. The chain is Acetyl-coenzyme A carboxylase carboxyl transferase subunit alpha from Streptococcus equi subsp. equi (strain 4047).